The primary structure comprises 607 residues: Guanine nucleotide-binding protein-like 1 (607 aa).

Residues 1–14 (MPRKKPFSVKQKKK) are compositionally biased toward basic residues. Residues 1–81 (MPRKKPFSVK…GPRGYDPNRY (81 aa)) form a disordered region. The segment covering 15 to 26 (QLQDKRERKRGL) has biased composition (basic and acidic residues). Phosphoserine occurs at positions 32, 33, and 34. Phosphothreonine is present on residues threonine 48 and threonine 50. Phosphoserine occurs at positions 51 and 68. The region spanning 178–418 (WRQLWRVLEM…LCDCPGLIFP (241 aa)) is the CP-type G domain. 225-228 (NKVD) contacts GTP. Serine 324 carries the post-translational modification Phosphoserine. Residues 367–374 (GFPNVGKS) and 411–415 (DCPGL) each bind GTP. Positions 547 to 607 (GPAGDEEEEE…PYALLGEDEC (61 aa)) are disordered. A compositionally biased stretch (acidic residues) spans 550-584 (GDEEEEEEEELSSSCEEEGEEDRDADEEGEGDEDT). 3 positions are modified to phosphoserine: serine 561, serine 562, and serine 563.

Belongs to the TRAFAC class YlqF/YawG GTPase family.

In terms of biological role, possible regulatory or functional link with the histocompatibility cluster. This chain is Guanine nucleotide-binding protein-like 1 (GNL1), found in Macaca fascicularis (Crab-eating macaque).